We begin with the raw amino-acid sequence, 263 residues long: UPF0758 protein NGR_c13970 (263 aa).

One can recognise an MPN domain in the interval 141–263; sequence VLSSWSAVID…HVSMKGLRLF (123 aa). Histidine 212, histidine 214, and aspartate 225 together coordinate Zn(2+). A JAMM motif motif is present at residues 212-225; sequence HNHPSGDPTPSRAD.

It belongs to the UPF0758 family.

The sequence is that of UPF0758 protein NGR_c13970 from Sinorhizobium fredii (strain NBRC 101917 / NGR234).